A 25-amino-acid polypeptide reads, in one-letter code: Antifungal protein 1 (25 aa).

The segment at 1 to 25 (QSERFEQQMQGQDFSHDERFLSQAA) is disordered. Residues 14 to 25 (FSHDERFLSQAA) show a composition bias toward basic and acidic residues.

The protein belongs to the 2S seed storage albumins family. Expressed in seed (at protein level). Not detected in pulp, stems and leaves.

In terms of biological role, has strong antifungal activity against T.harzianum, F.oxysporum and A.fumigatus with IC(50) values of 32 ug/ml, 34 ug/ml and 40 ug/ml, restectively. Lacks antifungal activity against R.solani, P.brasiliensis and C.albicans. This Passiflora edulis (Passion fruit) protein is Antifungal protein 1.